The sequence spans 191 residues: Thiol:disulfide interchange protein TxlA (191 aa).

The helical transmembrane segment at 14-30 threads the bilayer; sequence ILVIAAALVLTILVVLG. One can recognise a Thioredoxin domain in the interval 27-148; the sequence is VVLGSRQPSA…LAANLDALVE (122 aa). Cysteines 69 and 72 form a disulfide. Positions 165–185 are enriched in polar residues; it reads SADLQPSRSSQTDPRSHSGQV. The interval 165–191 is disordered; that stretch reads SADLQPSRSSQTDPRSHSGQVQDGVLD.

The protein belongs to the thioredoxin family.

It is found in the cell membrane. Functionally, required for disulfide bond formation in some proteins. Acts by transferring its disulfide bond to other proteins and is reduced in the process. This Synechococcus elongatus (strain ATCC 33912 / PCC 7942 / FACHB-805) (Anacystis nidulans R2) protein is Thiol:disulfide interchange protein TxlA (txlA).